The sequence spans 1391 residues: Axoneme-associated protein mst101(2) (1391 aa).

2 disordered regions span residues 170-213 and 280-300; these read ECNQ…GKKL and SSEP…EKEL. The segment covering 184 to 201 has biased composition (basic residues); it reads TKKGKTKGKSGGGNKKRS. Basic and acidic residues predominate over residues 291–300; the sequence is KNDEKKEKEL. Tandem repeats lie at residues 332–347, 348–363, 364–379, 380–395, 396–411, 412–427, 428–443, 444–459, 460–475, 476–491, 492–507, 508–523, 524–539, 540–555, 556–571, 572–587, 588–603, 604–619, 620–635, 636–651, 652–667, 668–683, 684–699, 700–715, 716–731, 732–747, 748–763, 764–779, 780–795, 796–811, 812–827, 828–843, 844–859, 860–875, 876–891, 892–907, 908–923, 924–939, 940–955, 956–971, 972–987, 988–1003, 1004–1019, 1020–1035, 1036–1051, 1052–1067, 1068–1083, 1084–1099, 1100–1115, 1116–1131, 1132–1147, 1148–1163, 1164–1179, 1180–1195, 1196–1211, 1212–1227, 1228–1243, 1244–1259, and 1260–1275. A 59 X 16 AA approximate tandem repeats of [KR]-K-X-C-X-X-X-A-K-X-X-K-X-X-X-E region spans residues 332–1275; that stretch reads KKKCKDLGRK…AEKKRKCEKA (944 aa). The tract at residues 370-429 is disordered; it reads LAKKKKEADEKKKCEEAANKEKKAAEKKKCEKAAKERKEAAEKKKCEEAAKKEKEAAERK. Residues 516–577 are disordered; it reads KKEKETAEKK…EAAEKKKCEK (62 aa). Over residues 517-577 the composition is skewed to basic and acidic residues; it reads KEKETAEKKK…EAAEKKKCEK (61 aa). Residues 729–765 show a composition bias toward basic residues; the sequence is AAEKKKCKKLAKKKKAGEKNKLKKGNKKGKKALKEKK. Disordered regions lie at residues 729–881, 900–922, and 934–1013; these read AAEK…EKAA, EKEL…VAER, and KAAE…AAEK. The segment covering 766–881 has biased composition (basic and acidic residues); that stretch reads KCRELAKKKA…AEKKKCEKAA (116 aa). 2 stretches are compositionally biased toward basic residues: residues 934–949 and 956–976; these read KAAE…KKEK and KLKK…KKSK. Basic and acidic residues predominate over residues 977–1013; sequence RAAEKKKCAEAAKKEKEAATKKKCEERAKKQKEAAEK. Disordered regions lie at residues 1076 to 1095 and 1104 to 1212; these read EKKQ…EKKQ and KEAA…EEAA. Over residues 1353 to 1370 the composition is skewed to basic and acidic residues; it reads KKEKEAAEKKKRCKDLAK. Positions 1353 to 1391 are disordered; that stretch reads KKEKEAAEKKKRCKDLAKNKKKGHKKKGRNENRKKRTDC. Basic residues predominate over residues 1371-1391; the sequence is NKKKGHKKKGRNENRKKRTDC.

Testis. Primary spermatocytes and early spermatids.

The protein resides in the cytoplasm. Functionally, possible structural role in the sperm tail. The protein is Axoneme-associated protein mst101(2) (mst101(2)) of Drosophila hydei (Fruit fly).